The primary structure comprises 363 residues: Exopolygalacturonase rpg13 (363 aa).

Positions 1 to 26 (MVKFLSLTSSVTALLLLSLGANGVAA) are cleaved as a signal peptide. N-linked (GlcNAc...) asparagine glycosylation is found at Asn121, Asn142, and Asn150. 5 PbH1 repeats span residues 143 to 173 (ATDV…DVSR), 174 to 195 (SSNV…AINE), 197 to 217 (VTNV…SVGS), 227 to 248 (VKTV…RIKT), and 256 to 277 (VSDI…LITT). The Proton donor role is filled by Asp188. The cysteines at positions 190 and 207 are disulfide-linked. A glycan (N-linked (GlcNAc...) asparagine) is linked at Asn199. His211 is an active-site residue. N-linked (GlcNAc...) asparagine glycosylation is present at Asn321. Cysteines 322 and 328 form a disulfide. A PbH1 6 repeat occupies 328 to 354 (CTDFTLSGVKITKASNTPKNVCVNLDG).

This sequence belongs to the glycosyl hydrolase 28 family. Post-translationally, N-glycosylated.

The protein resides in the secreted. It carries out the reaction [(1-&gt;4)-alpha-D-galacturonosyl](n) + H2O = alpha-D-galacturonate + [(1-&gt;4)-alpha-D-galacturonosyl](n-1). Functionally, specific in hydrolyzing the terminal glycosidic bond of polygalacturonic acid and oligogalacturonates. Has no activity towards trigalacturonic acid. This Rhizopus delemar (strain RA 99-880 / ATCC MYA-4621 / FGSC 9543 / NRRL 43880) (Mucormycosis agent) protein is Exopolygalacturonase rpg13.